The following is a 298-amino-acid chain: MTKQTEYKRKPEWLKIKLNTNENYTGLKKMMRSKNLHTVCEEAKCPNIHECWAVRKTATFMILGAVCTRACRFCAVKTGLPTELDLQEPERVADSVVQMGLKHVVITAVARDDLKDGGAAVFAETVRAVRRKNPFTSIEVLPSDMGGVEENLKMLMDAKPDILNHNIETVRRLSNRVRARAKYDRSLEFLRRAKEMQPDIPTKSSIMVGLGETREDLIEAMDDLRANNVDILTLGQYLQPSKKHLPVLKYYPPAEFAELKEIALSKGFSHCEAGPLVRSSYHADEQVRSAKEKTAEAK.

Residues cysteine 40, cysteine 45, cysteine 51, cysteine 67, cysteine 71, cysteine 74, and serine 280 each contribute to the [4Fe-4S] cluster site. In terms of domain architecture, Radical SAM core spans 53–269; that stretch reads AVRKTATFMI…KEIALSKGFS (217 aa).

It belongs to the radical SAM superfamily. Lipoyl synthase family. The cofactor is [4Fe-4S] cluster.

The protein localises to the cytoplasm. The enzyme catalyses [[Fe-S] cluster scaffold protein carrying a second [4Fe-4S](2+) cluster] + N(6)-octanoyl-L-lysyl-[protein] + 2 oxidized [2Fe-2S]-[ferredoxin] + 2 S-adenosyl-L-methionine + 4 H(+) = [[Fe-S] cluster scaffold protein] + N(6)-[(R)-dihydrolipoyl]-L-lysyl-[protein] + 4 Fe(3+) + 2 hydrogen sulfide + 2 5'-deoxyadenosine + 2 L-methionine + 2 reduced [2Fe-2S]-[ferredoxin]. Its pathway is protein modification; protein lipoylation via endogenous pathway; protein N(6)-(lipoyl)lysine from octanoyl-[acyl-carrier-protein]. Catalyzes the radical-mediated insertion of two sulfur atoms into the C-6 and C-8 positions of the octanoyl moiety bound to the lipoyl domains of lipoate-dependent enzymes, thereby converting the octanoylated domains into lipoylated derivatives. This chain is Lipoyl synthase, found in Bacillus anthracis (strain A0248).